The chain runs to 1154 residues: Voltage-dependent calcium channel subunit alpha-2/delta-2 (1154 aa).

Residues M1–T18 form the signal peptide. Positions M1–A37 are disordered. Over A19 to G1116 the chain is Extracellular. The span at G24 to R34 shows a compositional bias: pro residues. N205 carries an N-linked (GlcNAc...) asparagine glycan. The region spanning D294–L472 is the VWFA domain. A divalent metal cation-binding residues include D300, S302, and S304. Residues D300–S304 carry the MIDAS-like motif motif. N389, N421, N510, N543, N627, and N864 each carry an N-linked (GlcNAc...) asparagine glycan. A disulfide bridge links C446 with C1101. The 90-residue stretch at W488–P577 folds into the Cache domain. The chain crosses the membrane as a helical span at residues A1117–L1137. The Cytoplasmic segment spans residues P1138–L1154.

The protein belongs to the calcium channel subunit alpha-2/delta family. Dimer formed of alpha-2-2 and delta-2 chains; disulfide-linked. Voltage-dependent calcium channels are multisubunit complexes, consisting of alpha-1 (CACNA1), alpha-2 (CACNA2D), beta (CACNB) and delta (CACNA2D) subunits in a 1:1:1:1 ratio. N-glycosylated. In terms of processing, may be proteolytically processed into subunits alpha-2-2 and delta-2 that are disulfide-linked. It is however unclear whether such cleavage really takes place in vivo and has a functional role. According to PubMed:11306709, it is processed, at least in vitro, while according to PubMed:17052222, it is only poorly processed in vivo. As to expression, predominantly expressed in brain in a restricted pattern. Also expressed at lower level in kidney and testis Not expressed in lung at any moment of development. In brain, it localizes to sections of P21 brain. Expressed at high level in the cerebellum, with moderate levels in medulla, pons, and striatum. Also expressed in cortex, hippocampus, habenula and nucleus reticularis thalami (nRT). Strongly expressed in cerebellar Purkinje cells.

It is found in the membrane. Its function is as follows. The alpha-2/delta subunit of voltage-dependent calcium channels regulates calcium current density and activation/inactivation kinetics of the calcium channel. Acts as a regulatory subunit for P/Q-type calcium channel (CACNA1A), N-type (CACNA1B), L-type (CACNA1C OR CACNA1D) and possibly T-type (CACNA1G). This is Voltage-dependent calcium channel subunit alpha-2/delta-2 (Cacna2d2) from Mus musculus (Mouse).